Consider the following 106-residue polypeptide: NADH dehydrogenase [ubiquinone] iron-sulfur protein 5 (106 aa).

In terms of domain architecture, CHCH spans A30 to R74. 2 short sequence motifs (cx9C motif) span residues C33–C43 and C56–C66. Cystine bridges form between C33–C66 and C43–C56. Positions T78 to P106 are disordered.

This sequence belongs to the complex I NDUFS5 subunit family. In terms of assembly, mammalian complex I is composed of 45 different subunits. This is a component of the iron-sulfur (IP) fragment of the enzyme.

The protein localises to the mitochondrion inner membrane. Its subcellular location is the mitochondrion intermembrane space. Functionally, accessory subunit of the mitochondrial membrane respiratory chain NADH dehydrogenase (Complex I), that is believed not to be involved in catalysis. Complex I functions in the transfer of electrons from NADH to the respiratory chain. The immediate electron acceptor for the enzyme is believed to be ubiquinone. This Pongo abelii (Sumatran orangutan) protein is NADH dehydrogenase [ubiquinone] iron-sulfur protein 5 (NDUFS5).